An 829-amino-acid chain; its full sequence is Periplasmic nitrate reductase (829 aa).

Residues 1-29 (MKMTRRAFVKANAAASAAAVAGVTLPATA) constitute a signal peptide (tat-type signal). Positions 41 to 97 (ITWDKAPCRFCGTGCSVLVGTQNGKVVATQGDPEAPVNKGLNCIKGYFLSKIMYGKD) constitute a 4Fe-4S Mo/W bis-MGD-type domain. Residues cysteine 48, cysteine 51, cysteine 55, and cysteine 83 each coordinate [4Fe-4S] cluster. Residues lysine 85, glutamine 152, asparagine 177, cysteine 181, 214–221 (WGSNMAEM), 245–249 (STYYH), 264–266 (QSD), methionine 374, glutamine 378, asparagine 484, 510–511 (SD), lysine 533, aspartate 560, and 718–727 (TGRVLEHWHT) each bind Mo-bis(molybdopterin guanine dinucleotide). Phenylalanine 794 is a substrate binding site. Positions 802 and 819 each coordinate Mo-bis(molybdopterin guanine dinucleotide).

It belongs to the prokaryotic molybdopterin-containing oxidoreductase family. NasA/NapA/NarB subfamily. As to quaternary structure, component of the periplasmic nitrate reductase NapAB complex composed of NapA and NapB. Requires [4Fe-4S] cluster as cofactor. It depends on Mo-bis(molybdopterin guanine dinucleotide) as a cofactor. Predicted to be exported by the Tat system. The position of the signal peptide cleavage has not been experimentally proven.

It is found in the periplasm. The catalysed reaction is 2 Fe(II)-[cytochrome] + nitrate + 2 H(+) = 2 Fe(III)-[cytochrome] + nitrite + H2O. Functionally, catalytic subunit of the periplasmic nitrate reductase complex NapAB. Receives electrons from NapB and catalyzes the reduction of nitrate to nitrite. This is Periplasmic nitrate reductase from Vibrio atlanticus (strain LGP32) (Vibrio splendidus (strain Mel32)).